A 327-amino-acid polypeptide reads, in one-letter code: Lactosylceramide 4-alpha-galactosyltransferase (327 aa).

Residues 166 to 168 (DTD) carry the DXD motif motif.

This sequence belongs to the glycosyltransferase 32 family.

It localises to the golgi apparatus membrane. It carries out the reaction a beta-D-Gal-(1-&gt;4)-beta-D-Glc-(1&lt;-&gt;1)-Cer(d18:1(4E)) + UDP-alpha-D-galactose = a globoside Gb3Cer (d18:1(4E)) + UDP + H(+). It catalyses the reaction a beta-D-Gal-(1&lt;-&gt;1')-ceramide + UDP-alpha-D-galactose = alpha-D-Gal-(1-&gt;4)-beta-D-Gal-(1&lt;-&gt;1')-Cer + UDP + H(+). Its pathway is glycolipid biosynthesis. Catalyzes the transfer of galactose from UDP-alpha-D-galactose to lactosylceramide/beta-D-galactosyl-(1-&gt;4)-beta-D-glucosyl-(1&lt;-&gt;1)-ceramide(d18:1(4E)) to produce globotriaosylceramide/globoside Gb3Cer (d18:1(4E)). Also able to transfer galactose to galactosylceramide/beta-D-Gal-(1&lt;-&gt;1')-Cer. Globoside Gb3Cer is a glycosphingolipid of the globo serie, one of the major types of neutral root structures of glycosphingolipids, that constitute a significant portion of mammalian cell membranes. The sequence is that of Lactosylceramide 4-alpha-galactosyltransferase (A4GALT) from Gorilla gorilla gorilla (Western lowland gorilla).